A 494-amino-acid chain; its full sequence is Subtilisin-like serine protease EN45_078720 (494 aa).

A signal peptide spans 1 to 16; sequence MKGFLSLTLLPLLVAA. Residues 17–136 constitute a propeptide, removed in mature form; that stretch reads SPVAVNSIHN…IEKDSEVRTM (120 aa). The 94-residue stretch at 43–136 folds into the Inhibitor I9 domain; it reads SYIVVFKKHV…IEKDSEVRTM (94 aa). One can recognise a Peptidase S8 domain in the interval 146 to 448; it reads PWGLARISHR…GGSANYTKIL (303 aa). IgE-binding regions lie at residues 180-198 and 209-231; these read VIDTGANVKHVDFEGRANW and EDGNGHGTHCSGTIAGKKFGVAK. Active-site charge relay system residues include Asp182 and His214. Asn244 and Asn280 each carry an N-linked (GlcNAc...) asparagine glycan. Ser376 serves as the catalytic Charge relay system. The N-linked (GlcNAc...) asparagine glycan is linked to Asn443. The propeptide at 454 to 494 is removed in mature form; it reads KAHNAETTVEDRIGGIIDSAEKAFHKELGAIYSEIKDAVSA.

The protein belongs to the peptidase S8 family.

Serine protease. This chain is Subtilisin-like serine protease EN45_078720, found in Penicillium chrysogenum (Penicillium notatum).